A 477-amino-acid polypeptide reads, in one-letter code: Asparaginyl-tRNA synthetase (477 aa).

A mitochondrion-targeting transit peptide spans 1–14 (MLGARRLLGALRLC). N6-acetyllysine is present on Lys353.

This sequence belongs to the class-II aminoacyl-tRNA synthetase family. In terms of assembly, homodimer. Expressed in brain and inner ear, including the cochlear epithelium and organ of Corti.

It is found in the mitochondrion matrix. The protein localises to the mitochondrion. It carries out the reaction tRNA(Asn) + L-asparagine + ATP = L-asparaginyl-tRNA(Asn) + AMP + diphosphate + H(+). In terms of biological role, mitochondrial aminoacyl-tRNA synthetase that catalyzes the specific attachment of the asparagine amino acid (aa) to the homologous transfer RNA (tRNA), further participating in protein synthesis. The reaction occurs in a two steps: asparagine is first activated by ATP to form Asn-AMP and then transferred to the acceptor end of tRNA(Asn). In Mus musculus (Mouse), this protein is Asparaginyl-tRNA synthetase.